Here is a 398-residue protein sequence, read N- to C-terminus: Acetate kinase (398 aa).

Asn10 is a binding site for Mg(2+). An ATP-binding site is contributed by Lys17. Position 89 (Arg89) interacts with substrate. Residue Asp148 is the Proton donor/acceptor of the active site. ATP is bound by residues 208–212, 283–285, and 331–335; these read HLGNG, DCR, and GIGEN. Mg(2+) is bound at residue Glu385.

It belongs to the acetokinase family. Homodimer. Mg(2+) is required as a cofactor. The cofactor is Mn(2+).

The protein localises to the cytoplasm. The enzyme catalyses acetate + ATP = acetyl phosphate + ADP. Its pathway is metabolic intermediate biosynthesis; acetyl-CoA biosynthesis; acetyl-CoA from acetate: step 1/2. Its function is as follows. Catalyzes the formation of acetyl phosphate from acetate and ATP. Can also catalyze the reverse reaction. The protein is Acetate kinase of Histophilus somni (strain 129Pt) (Haemophilus somnus).